A 350-amino-acid polypeptide reads, in one-letter code: Isopentenyl-diphosphate delta-isomerase (350 aa).

15–16 provides a ligand contact to substrate; sequence RK. Residues Ser73, 74–76, Ser104, and Asn132 contribute to the FMN site; that span reads SMT. 104-106 contributes to the substrate binding site; that stretch reads SQR. Gln167 contributes to the substrate binding site. Glu168 is a binding site for Mg(2+). Residues Lys199, Thr229, 279-281, and 300-301 contribute to the FMN site; these read GLR and AM.

This sequence belongs to the IPP isomerase type 2 family. Homooctamer. Dimer of tetramers. Requires FMN as cofactor. NADPH is required as a cofactor. The cofactor is Mg(2+).

It is found in the cytoplasm. The catalysed reaction is isopentenyl diphosphate = dimethylallyl diphosphate. Its function is as follows. Involved in the biosynthesis of isoprenoids. Catalyzes the 1,3-allylic rearrangement of the homoallylic substrate isopentenyl (IPP) to its allylic isomer, dimethylallyl diphosphate (DMAPP). This Nostoc sp. (strain PCC 7120 / SAG 25.82 / UTEX 2576) protein is Isopentenyl-diphosphate delta-isomerase.